The sequence spans 123 residues: Protein Rev (123 aa).

Residue Ser5 is modified to Phosphoserine; by host CK2. The homomultimerization stretch occupies residues 18–26 (IIKTLYQSN). 2 disordered regions span residues 24–50 (QSNP…ARQR) and 79–123 (EGLS…GTKE). Residues 34 to 50 (TRQARKNRRRRWRARQR) carry the Nuclear localization signal and RNA-binding (RRE) motif. Over residues 36–50 (QARKNRRRRWRARQR) the composition is skewed to basic residues. Residues 73 to 84 (FQLPPLEGLSLD) carry the Nuclear export signal and binding to XPO1 motif. The residue at position 92 (Ser92) is a Phosphoserine; by host. Residues 93-105 (GTQQPQGTETGVG) are compositionally biased toward low complexity.

It belongs to the HIV-1 REV protein family. Homomultimer; when bound to the RRE. Multimeric assembly is essential for activity and may involve XPO1. Binds to human KPNB1, XPO1, TNPO1, RANBP5 and IPO7. Interacts with the viral Integrase. Interacts with human KHDRBS1. Interacts with human NAP1; this interaction decreases Rev multimerization and stimulates its activity. Interacts with human DEAD-box helicases DDX3 and DDX24; these interactions may serve for viral RNA export to the cytoplasm and packaging, respectively. Interacts with human PSIP1; this interaction may inhibit HIV-1 DNA integration by promoting dissociation of the Integrase-LEDGF/p75 complex. In terms of processing, asymmetrically arginine dimethylated at one site by host PRMT6. Methylation impairs the RNA-binding activity and export of viral RNA from the nucleus to the cytoplasm. Post-translationally, phosphorylated by protein kinase CK2. Presence of, and maybe binding to the N-terminus of the regulatory beta subunit of CK2 is necessary for CK2-mediated Rev's phosphorylation.

It is found in the host nucleus. Its subcellular location is the host nucleolus. It localises to the host cytoplasm. Its function is as follows. Escorts unspliced or incompletely spliced viral pre-mRNAs (late transcripts) out of the nucleus of infected cells. These pre-mRNAs carry a recognition sequence called Rev responsive element (RRE) located in the env gene, that is not present in fully spliced viral mRNAs (early transcripts). This function is essential since most viral proteins are translated from unspliced or partially spliced pre-mRNAs which cannot exit the nucleus by the pathway used by fully processed cellular mRNAs. Rev itself is translated from a fully spliced mRNA that readily exits the nucleus. Rev's nuclear localization signal (NLS) binds directly to KPNB1/Importin beta-1 without previous binding to KPNA1/Importin alpha-1. KPNB1 binds to the GDP bound form of RAN (Ran-GDP) and targets Rev to the nucleus. In the nucleus, the conversion from Ran-GDP to Ran-GTP dissociates Rev from KPNB1 and allows Rev's binding to the RRE in viral pre-mRNAs. Rev multimerization on the RRE via cooperative assembly exposes its nuclear export signal (NES) to the surface. Rev can then form a complex with XPO1/CRM1 and Ran-GTP, leading to nuclear export of the complex. Conversion from Ran-GTP to Ran-GDP mediates dissociation of the Rev/RRE/XPO1/RAN complex, so that Rev can return to the nucleus for a subsequent round of export. Beside KPNB1, also seems to interact with TNPO1/Transportin-1, RANBP5/IPO5 and IPO7/RANBP7 for nuclear import. The nucleoporin-like HRB/RIP is an essential cofactor that probably indirectly interacts with Rev to release HIV RNAs from the perinuclear region to the cytoplasm. The polypeptide is Protein Rev (Human immunodeficiency virus type 1 group M subtype G (isolate 92NG083) (HIV-1)).